A 199-amino-acid chain; its full sequence is MGDPTNNNDSETKPNPATYWKSRFPVARIKKIMQADQDVGKVAQVTPVIMSKALELFMQSIIQESCKQTRLHQAKRVTVSHLKHAVQSVEQFDFLQDIVEKVPDAPPIKAERKTKRPRARRAANEGEHNESVPAKKVKKNTVKEEEIEKDDESATTETPVKEEPTGEETEADHEEKASVDHGNFSDKTTSEASSASGDE.

The tract at residues 106–199 (PPIKAERKTK…SEASSASGDE (94 aa)) is disordered. A compositionally biased stretch (basic residues) spans 112–121 (RKTKRPRARR). The span at 185–199 (SDKTTSEASSASGDE) shows a compositional bias: polar residues.

It belongs to the NC2 alpha/DRAP1 family.

It is found in the nucleus. Its function is as follows. Transcription regulator complex subunit that is essential for cell cycle progression. The polypeptide is Transcription regulator complex subunit bur6 (Schizosaccharomyces pombe (strain 972 / ATCC 24843) (Fission yeast)).